The chain runs to 775 residues: Phosphoribosylformylglycinamidine synthase subunit PurL (775 aa).

The active site involves histidine 81. ATP-binding residues include tyrosine 84 and lysine 123. Glutamate 125 lines the Mg(2+) pocket. Residues 126–129 (SHNH) and arginine 148 contribute to the substrate site. Histidine 127 acts as the Proton acceptor in catalysis. Residue aspartate 149 participates in Mg(2+) binding. Glutamine 272 is a binding site for substrate. Aspartate 300 contacts Mg(2+). 344 to 346 (ESQ) serves as a coordination point for substrate. ATP is bound by residues aspartate 525 and glycine 562. A Mg(2+)-binding site is contributed by asparagine 563. Serine 565 contacts substrate.

The protein belongs to the FGAMS family. In terms of assembly, monomer. Part of the FGAM synthase complex composed of 1 PurL, 1 PurQ and 2 PurS subunits.

It localises to the cytoplasm. The catalysed reaction is N(2)-formyl-N(1)-(5-phospho-beta-D-ribosyl)glycinamide + L-glutamine + ATP + H2O = 2-formamido-N(1)-(5-O-phospho-beta-D-ribosyl)acetamidine + L-glutamate + ADP + phosphate + H(+). It participates in purine metabolism; IMP biosynthesis via de novo pathway; 5-amino-1-(5-phospho-D-ribosyl)imidazole from N(2)-formyl-N(1)-(5-phospho-D-ribosyl)glycinamide: step 1/2. Its function is as follows. Part of the phosphoribosylformylglycinamidine synthase complex involved in the purines biosynthetic pathway. Catalyzes the ATP-dependent conversion of formylglycinamide ribonucleotide (FGAR) and glutamine to yield formylglycinamidine ribonucleotide (FGAM) and glutamate. The FGAM synthase complex is composed of three subunits. PurQ produces an ammonia molecule by converting glutamine to glutamate. PurL transfers the ammonia molecule to FGAR to form FGAM in an ATP-dependent manner. PurS interacts with PurQ and PurL and is thought to assist in the transfer of the ammonia molecule from PurQ to PurL. In Agrobacterium fabrum (strain C58 / ATCC 33970) (Agrobacterium tumefaciens (strain C58)), this protein is Phosphoribosylformylglycinamidine synthase subunit PurL.